The chain runs to 438 residues: GTPase Der (438 aa).

2 EngA-type G domains span residues 4-168 and 177-352; these read PIVA…PEGN and IRIA…GNYC. GTP contacts are provided by residues 10 to 17, 57 to 61, 120 to 123, 183 to 190, 230 to 234, and 295 to 298; these read GRPNVGKS, DTGGI, NKID, DTAGL, and NKWD. A KH-like domain is found at 353–437; sequence KRIKTGILND…GIKLEFRERK (85 aa).

The protein belongs to the TRAFAC class TrmE-Era-EngA-EngB-Septin-like GTPase superfamily. EngA (Der) GTPase family. In terms of assembly, associates with the 50S ribosomal subunit.

Functionally, GTPase that plays an essential role in the late steps of ribosome biogenesis. This chain is GTPase Der, found in Clostridium novyi (strain NT).